Reading from the N-terminus, the 216-residue chain is Superoxide dismutase [Cu-Zn] 2, chloroplastic (216 aa).

A chloroplast-targeting transit peptide spans 1-62 (MAATNTILAF…APSKALTVVS (62 aa)). Positions 108, 110, and 125 each coordinate Cu cation. A disulfide bond links Cys119 and Cys208. Zn(2+)-binding residues include His125, His133, His142, and Asp145. His182 is a binding site for Cu cation.

It belongs to the Cu-Zn superoxide dismutase family. In terms of assembly, homotetramer. Cu cation is required as a cofactor. The cofactor is Zn(2+). Expressed in leaves (at protein level). The spatial localization is regulated by miR398-mediated silencing. Mostly present in flowers, old rosette leaves and inflorescence, and, to a lower extent, in cauline leaves, stems and roots.

The protein resides in the plastid. It localises to the chloroplast. The enzyme catalyses 2 superoxide + 2 H(+) = H2O2 + O2. In terms of biological role, destroys radicals which are normally produced within the cells and which are toxic to biological systems. Mediates tolerance to stress, including photo-oxidative stress. This chain is Superoxide dismutase [Cu-Zn] 2, chloroplastic (CSD2), found in Arabidopsis thaliana (Mouse-ear cress).